A 431-amino-acid polypeptide reads, in one-letter code: tRNA(Ile)-lysidine synthase (431 aa).

19 to 24 (STGIDS) contacts ATP.

This sequence belongs to the tRNA(Ile)-lysidine synthase family.

It is found in the cytoplasm. It carries out the reaction cytidine(34) in tRNA(Ile2) + L-lysine + ATP = lysidine(34) in tRNA(Ile2) + AMP + diphosphate + H(+). Functionally, ligates lysine onto the cytidine present at position 34 of the AUA codon-specific tRNA(Ile) that contains the anticodon CAU, in an ATP-dependent manner. Cytidine is converted to lysidine, thus changing the amino acid specificity of the tRNA from methionine to isoleucine. The protein is tRNA(Ile)-lysidine synthase of Staphylococcus aureus (strain Mu50 / ATCC 700699).